A 190-amino-acid polypeptide reads, in one-letter code: Ribosome maturation factor RimM (190 aa).

In terms of domain architecture, PRC barrel spans 114–190 (DDEYYWVDLI…CITVDWQPDY (77 aa)).

This sequence belongs to the RimM family. In terms of assembly, binds ribosomal protein uS19.

The protein resides in the cytoplasm. Functionally, an accessory protein needed during the final step in the assembly of 30S ribosomal subunit, possibly for assembly of the head region. Essential for efficient processing of 16S rRNA. May be needed both before and after RbfA during the maturation of 16S rRNA. It has affinity for free ribosomal 30S subunits but not for 70S ribosomes. The chain is Ribosome maturation factor RimM from Acidovorax sp. (strain JS42).